The following is a 758-amino-acid chain: ATP-dependent RNA helicase dbp7 (758 aa).

Disordered regions lie at residues 26 to 99 (GGTW…QPRQ) and 111 to 130 (PQKV…KPTN). A compositionally biased stretch (basic residues) spans 35–45 (AKKIAKHHAKG). Residues 84–99 (GKQQSHTHPHSNQPRQ) show a composition bias toward polar residues. Basic and acidic residues predominate over residues 111–127 (PQKVEEVKEEGHVEDAK). The Q motif motif lies at 138 to 167 (DTFTNLGLSPSLAAHLLTKLELKAPTAIQK). The region spanning 171–372 (SQLLKEEGDA…EISLKDAVHI (202 aa)) is the Helicase ATP-binding domain. Residue 184–191 (AETGSGKT) participates in ATP binding. Positions 308–311 (DEGD) match the DEAD box motif. The Helicase C-terminal domain occupies 398-603 (QLKQSYAVVA…ALTRADANDI (206 aa)). Disordered regions lie at residues 455 to 483 (KEDG…APAT) and 691 to 758 (VPGL…FNLA). The segment covering 696 to 709 (QGKEETKKDFKAER) has biased composition (basic and acidic residues).

It belongs to the DEAD box helicase family. DDX31/DBP7 subfamily.

The protein localises to the nucleus. It localises to the nucleolus. It carries out the reaction ATP + H2O = ADP + phosphate + H(+). Its function is as follows. ATP-binding RNA helicase involved in the biogenesis of 60S ribosomal subunits and is required for the normal formation of 25S and 5.8S rRNAs. This Neosartorya fischeri (strain ATCC 1020 / DSM 3700 / CBS 544.65 / FGSC A1164 / JCM 1740 / NRRL 181 / WB 181) (Aspergillus fischerianus) protein is ATP-dependent RNA helicase dbp7 (dbp7).